Reading from the N-terminus, the 890-residue chain is Alanine--tRNA ligase (890 aa).

His-572, His-576, Cys-674, and His-678 together coordinate Zn(2+).

This sequence belongs to the class-II aminoacyl-tRNA synthetase family. Zn(2+) serves as cofactor.

The protein resides in the cytoplasm. The catalysed reaction is tRNA(Ala) + L-alanine + ATP = L-alanyl-tRNA(Ala) + AMP + diphosphate. Catalyzes the attachment of alanine to tRNA(Ala) in a two-step reaction: alanine is first activated by ATP to form Ala-AMP and then transferred to the acceptor end of tRNA(Ala). Also edits incorrectly charged Ser-tRNA(Ala) and Gly-tRNA(Ala) via its editing domain. The sequence is that of Alanine--tRNA ligase from Prochlorococcus marinus (strain MIT 9211).